Reading from the N-terminus, the 136-residue chain is Small ribosomal subunit protein uS9 (136 aa).

The protein belongs to the universal ribosomal protein uS9 family.

The chain is Small ribosomal subunit protein uS9 from Borrelia duttonii (strain Ly).